The sequence spans 238 residues: Ubiquinone biosynthesis O-methyltransferase (238 aa).

S-adenosyl-L-methionine contacts are provided by Arg36, Gly56, Asp77, and Met125.

This sequence belongs to the methyltransferase superfamily. UbiG/COQ3 family.

It carries out the reaction a 3-demethylubiquinol + S-adenosyl-L-methionine = a ubiquinol + S-adenosyl-L-homocysteine + H(+). The catalysed reaction is a 3-(all-trans-polyprenyl)benzene-1,2-diol + S-adenosyl-L-methionine = a 2-methoxy-6-(all-trans-polyprenyl)phenol + S-adenosyl-L-homocysteine + H(+). It participates in cofactor biosynthesis; ubiquinone biosynthesis. In terms of biological role, O-methyltransferase that catalyzes the 2 O-methylation steps in the ubiquinone biosynthetic pathway. The chain is Ubiquinone biosynthesis O-methyltransferase from Histophilus somni (strain 2336) (Haemophilus somnus).